Consider the following 447-residue polypeptide: Omega-3 fatty acid desaturase, chloroplastic (447 aa).

Positions 167–171 (HDCGH) match the Histidine box-1 motif. A Histidine box-2 motif is present at residues 203–207 (HRTHH). A Histidine box-3 motif is present at residues 370 to 374 (HVIHH).

Belongs to the fatty acid desaturase type 1 family.

It localises to the plastid. The protein resides in the chloroplast membrane. Its pathway is lipid metabolism; polyunsaturated fatty acid biosynthesis. In terms of biological role, chloroplast omega-3 fatty acid desaturase introduces the third double bond in the biosynthesis of 16:3 and 18:3 fatty acids, important constituents of plant membranes. It is thought to use ferredoxin as an electron donor and to act on fatty acids esterified to galactolipids, sulfolipids and phosphatidylglycerol. This chain is Omega-3 fatty acid desaturase, chloroplastic (FAD7), found in Sesamum indicum (Oriental sesame).